The chain runs to 3206 residues: Genome polyprotein (3206 aa).

Residues 255 to 397 enclose the Peptidase S30 domain; the sequence is KMKTESIDVL…WRKMFQIDHF (143 aa). Residues His307, Asp316, and Ser348 each act as for P1 proteinase activity in the active site. Residues 450-453 carry the Involved in interaction with stylet and aphid transmission motif; the sequence is RITC. Residues 708–710 carry the Involved in virions binding and aphid transmission motif; the sequence is PTR. The region spanning 734 to 856 is the Peptidase C6 domain; that stretch reads MWIAKEGYCY…LGEMKMYRVG (123 aa). Active-site for helper component proteinase activity residues include Cys742 and His815. The Helicase ATP-binding domain occupies 1338–1490; it reads IAHTPDFSEY…TQFPVTIATE (153 aa). 1351-1358 serves as a coordination point for ATP; sequence GAVGSGKS. The DECH box motif lies at 1440 to 1443; the sequence is DECH. Residues 1494–1668 form the Helicase C-terminal domain; the sequence is SFDQFVQAQG…GLPVMTSNVS (175 aa). The Nuclear localization signal signature appears at 1994 to 2001; that stretch reads KKGKKSGK. Position 2016 is an O-(5'-phospho-RNA)-tyrosine (Tyr2016). The region spanning 2150–2368 is the Peptidase C4 domain; sequence AASLHFGLRD…VCWGGLELLD (219 aa). Catalysis depends on for nuclear inclusion protein A activity residues His2195, Asp2230, and Cys2300. The region spanning 2637–2761 is the RdRp catalytic domain; it reads WLYCDADGSR…AVRPDCEFVL (125 aa). Residues 2900–2979 form a disordered region; the sequence is HYNDEGGDGS…DRDVDAGSSG (80 aa). Basic and acidic residues-rich tracts occupy residues 2916–2939 and 2949–2974; these read AGDETKDDERRRKEEEDRKKREES and RDNKKNKNKESDTPNKLIVKSDRDVD.

The protein belongs to the potyviridae genome polyprotein family. Interacts with host eIF4E protein (via cap-binding region); this interaction mediates the translation of the VPg-viral RNA conjugates. Part of a complex that comprises VPg, RNA, host EIF4E and EIF4G; this interaction mediates the translation of the VPg-viral RNA conjugates. Post-translationally, VPg is uridylylated by the polymerase and is covalently attached to the 5'-end of the genomic RNA. This uridylylated form acts as a nucleotide-peptide primer for the polymerase. Potyviral RNA is expressed as two polyproteins which undergo post-translational proteolytic processing. Genome polyprotein is processed by NIa-pro, P1 and HC-pro proteinases resulting in the production of at least ten individual proteins. P3N-PIPO polyprotein is cleaved by P1 and HC-pro proteinases resulting in the production of three individual proteins. The P1 proteinase and the HC-pro cleave only their respective C-termini autocatalytically. 6K1 is essential for proper proteolytic separation of P3 from CI.

The protein resides in the host cytoplasmic vesicle. The protein localises to the host nucleus. It localises to the virion. It carries out the reaction RNA(n) + a ribonucleoside 5'-triphosphate = RNA(n+1) + diphosphate. It catalyses the reaction Hydrolyzes glutaminyl bonds, and activity is further restricted by preferences for the amino acids in P6 - P1' that vary with the species of potyvirus, e.g. Glu-Xaa-Xaa-Tyr-Xaa-Gln-|-(Ser or Gly) for the enzyme from tobacco etch virus. The natural substrate is the viral polyprotein, but other proteins and oligopeptides containing the appropriate consensus sequence are also cleaved.. The enzyme catalyses Hydrolyzes a Gly-|-Gly bond at its own C-terminus, commonly in the sequence -Tyr-Xaa-Val-Gly-|-Gly, in the processing of the potyviral polyprotein.. Functionally, required for aphid transmission and also has proteolytic activity. Only cleaves a Gly-Gly dipeptide at its own C-terminus. Interacts with virions and aphid stylets. Acts as a suppressor of RNA-mediated gene silencing, also known as post-transcriptional gene silencing (PTGS), a mechanism of plant viral defense that limits the accumulation of viral RNAs. May have RNA-binding activity. Its function is as follows. Has helicase activity. It may be involved in replication. In terms of biological role, indispensable for virus replication. Mediates the cap-independent, EIF4E-dependent translation of viral genomic RNAs. Binds to the cap-binding site of host EIF4E and thus interferes with the host EIF4E-dependent mRNA export and translation. VPg-RNA directly binds EIF4E and is a template for transcription. Also forms trimeric complexes with EIF4E-EIF4G, which are templates for translation. Functionally, has RNA-binding and proteolytic activities. Its function is as follows. An RNA-dependent RNA polymerase that plays an essential role in the virus replication. In terms of biological role, involved in aphid transmission, cell-to-cell and systemis movement, encapsidation of the viral RNA and in the regulation of viral RNA amplification. In Pisum sativum (Garden pea), this protein is Genome polyprotein.